The following is a 135-amino-acid chain: uncharacterized protein (135 aa).

The HotDog ACOT-type domain occupies 8 to 123 (PKGKMVLRTL…IFVYVAVDEF (116 aa)).

Belongs to the acyl coenzyme A hydrolase family.

This is an uncharacterized protein from Buchnera aphidicola subsp. Baizongia pistaciae (strain Bp).